Here is an 81-residue protein sequence, read N- to C-terminus: MAHSVKIYDTCIGCTQCVRACPTDVLEMVPWDGCRANQIASAPRTEDCVGCKRCESACPTDFLSVRVYLGAETTRSMGLAY.

2 consecutive 4Fe-4S ferredoxin-type domains span residues 2-31 (AHSV…MVPW) and 39-68 (IASA…VRVY). Residues Cys-11, Cys-14, Cys-17, Cys-21, Cys-48, Cys-51, Cys-54, and Cys-58 each coordinate [4Fe-4S] cluster.

In terms of assembly, the eukaryotic PSI reaction center is composed of at least 11 subunits. [4Fe-4S] cluster is required as a cofactor.

The protein localises to the plastid. Its subcellular location is the chloroplast thylakoid membrane. It carries out the reaction reduced [plastocyanin] + hnu + oxidized [2Fe-2S]-[ferredoxin] = oxidized [plastocyanin] + reduced [2Fe-2S]-[ferredoxin]. Functionally, apoprotein for the two 4Fe-4S centers FA and FB of photosystem I (PSI); essential for photochemical activity. FB is the terminal electron acceptor of PSI, donating electrons to ferredoxin. The C-terminus interacts with PsaA/B/D and helps assemble the protein into the PSI complex. Required for binding of PsaD and PsaE to PSI. PSI is a plastocyanin-ferredoxin oxidoreductase, converting photonic excitation into a charge separation, which transfers an electron from the donor P700 chlorophyll pair to the spectroscopically characterized acceptors A0, A1, FX, FA and FB in turn. This chain is Photosystem I iron-sulfur center, found in Chlorokybus atmophyticus (Soil alga).